Reading from the N-terminus, the 87-residue chain is Cell division topological specificity factor (87 aa).

Belongs to the MinE family.

Functionally, prevents the cell division inhibition by proteins MinC and MinD at internal division sites while permitting inhibition at polar sites. This ensures cell division at the proper site by restricting the formation of a division septum at the midpoint of the long axis of the cell. This is Cell division topological specificity factor from Rhizobium meliloti (strain 1021) (Ensifer meliloti).